The following is a 188-amino-acid chain: Large ribosomal subunit protein bL35m (188 aa).

It belongs to the bacterial ribosomal protein bL35 family.

It is found in the mitochondrion. In Pongo abelii (Sumatran orangutan), this protein is Large ribosomal subunit protein bL35m (MRPL35).